The sequence spans 419 residues: CinA-like protein (419 aa).

Belongs to the CinA family.

The sequence is that of CinA-like protein from Parasynechococcus marenigrum (strain WH8102).